A 78-amino-acid chain; its full sequence is Small ribosomal subunit protein bS18B (78 aa).

The tract at residues 1–22 (MPRKPVRKVASTPRPNPLDQNG) is disordered.

Belongs to the bacterial ribosomal protein bS18 family. Part of the 30S ribosomal subunit. Forms a tight heterodimer with protein bS6.

Binds as a heterodimer with protein bS6 to the central domain of the 16S rRNA, where it helps stabilize the platform of the 30S subunit. In Streptomyces avermitilis (strain ATCC 31267 / DSM 46492 / JCM 5070 / NBRC 14893 / NCIMB 12804 / NRRL 8165 / MA-4680), this protein is Small ribosomal subunit protein bS18B.